We begin with the raw amino-acid sequence, 494 residues long: Ketol-acid reductoisomerase (NADP(+)) (494 aa).

The 195-residue stretch at 14 to 208 (LEQLGKCRFM…GGHRAGVLQS (195 aa)) folds into the KARI N-terminal Rossmann domain. Residues 45 to 48 (CGAQ), R68, R76, S78, and 108 to 110 (DKQ) each bind NADP(+). H132 is a catalytic residue. NADP(+) is bound at residue G158. 2 KARI C-terminal knotted domains span residues 209 to 344 (SFVA…NAPA) and 345 to 487 (FDGA…MKDM). Mg(2+) contacts are provided by D217, E221, E389, and E393. S414 is a substrate binding site.

Belongs to the ketol-acid reductoisomerase family. Mg(2+) is required as a cofactor.

The enzyme catalyses (2R)-2,3-dihydroxy-3-methylbutanoate + NADP(+) = (2S)-2-acetolactate + NADPH + H(+). The catalysed reaction is (2R,3R)-2,3-dihydroxy-3-methylpentanoate + NADP(+) = (S)-2-ethyl-2-hydroxy-3-oxobutanoate + NADPH + H(+). The protein operates within amino-acid biosynthesis; L-isoleucine biosynthesis; L-isoleucine from 2-oxobutanoate: step 2/4. Its pathway is amino-acid biosynthesis; L-valine biosynthesis; L-valine from pyruvate: step 2/4. In terms of biological role, involved in the biosynthesis of branched-chain amino acids (BCAA). Catalyzes an alkyl-migration followed by a ketol-acid reduction of (S)-2-acetolactate (S2AL) to yield (R)-2,3-dihydroxy-isovalerate. In the isomerase reaction, S2AL is rearranged via a Mg-dependent methyl migration to produce 3-hydroxy-3-methyl-2-ketobutyrate (HMKB). In the reductase reaction, this 2-ketoacid undergoes a metal-dependent reduction by NADPH to yield (R)-2,3-dihydroxy-isovalerate. The chain is Ketol-acid reductoisomerase (NADP(+)) from Tolumonas auensis (strain DSM 9187 / NBRC 110442 / TA 4).